The chain runs to 317 residues: MRIVFMGTPDFAATSLKALIDAGQQVVAVVTQPDKPKGRGRQVQPPPVKVLANEYKIPVLQPTSIKINEFQQTIEELKPECIVVVAYGKILPTEILELPPKGCINVHASLLPYYRGSAPIHWAIINGEEETGVTTMFMDKGMDTGDMILKSSVSIGPSDTVGAIHDKLASDGAKLLIETIHLLEEDCAPRIPQNHKLATYAPMLRKEHELIHWDLSAKDIHNHVRGMNPWPGTYTIWDNKILKIWQTTIPAHQNIDADPGTVLEVSPSGILVQTAGGQILIKELQLQGSRRMEVTEFLRGKQMSPGTVLGFEGGRGN.

A (6S)-5,6,7,8-tetrahydrofolate-binding site is contributed by 109–112; sequence SLLP.

It belongs to the Fmt family.

It catalyses the reaction L-methionyl-tRNA(fMet) + (6R)-10-formyltetrahydrofolate = N-formyl-L-methionyl-tRNA(fMet) + (6S)-5,6,7,8-tetrahydrofolate + H(+). Functionally, attaches a formyl group to the free amino group of methionyl-tRNA(fMet). The formyl group appears to play a dual role in the initiator identity of N-formylmethionyl-tRNA by promoting its recognition by IF2 and preventing the misappropriation of this tRNA by the elongation apparatus. This chain is Methionyl-tRNA formyltransferase, found in Desulforamulus reducens (strain ATCC BAA-1160 / DSM 100696 / MI-1) (Desulfotomaculum reducens).